We begin with the raw amino-acid sequence, 210 residues long: 23.5 kDa heat shock protein, mitochondrial (210 aa).

The transit peptide at 1–20 directs the protein to the mitochondrion; the sequence is MASSSALALRRLLSSSTVAV. Residues 102-210 form the sHSP domain; that stretch reads MGASGVRRGW…RNNIRHINVD (109 aa).

It belongs to the small heat shock protein (HSP20) family. May form oligomeric structures.

It localises to the mitochondrion. The protein is 23.5 kDa heat shock protein, mitochondrial (HSP23.5) of Arabidopsis thaliana (Mouse-ear cress).